We begin with the raw amino-acid sequence, 278 residues long: Octanoyltransferase LipM (278 aa).

The region spanning 33–248 (KKMPPTIRFY…GFEKGLDVEL (216 aa)) is the BPL/LPL catalytic domain. Cys-150 (acyl-thioester intermediate) is an active-site residue.

The protein belongs to the octanoyltransferase LipM family. As to quaternary structure, monomer.

It catalyses the reaction octanoyl-[ACP] + L-lysyl-[protein] = N(6)-octanoyl-L-lysyl-[protein] + holo-[ACP] + H(+). It participates in protein modification; protein lipoylation via endogenous pathway; protein N(6)-(lipoyl)lysine from octanoyl-[acyl-carrier-protein]. Its function is as follows. Catalyzes the transfer of endogenously produced octanoic acid from octanoyl-acyl-carrier-protein onto the lipoyl domain of GcvH, an intermediate carrier during protein lipoylation. The polypeptide is Octanoyltransferase LipM (Bacillus anthracis).